A 429-amino-acid chain; its full sequence is Histidine--tRNA ligase (429 aa).

It belongs to the class-II aminoacyl-tRNA synthetase family. In terms of assembly, homodimer.

The protein resides in the cytoplasm. It catalyses the reaction tRNA(His) + L-histidine + ATP = L-histidyl-tRNA(His) + AMP + diphosphate + H(+). The protein is Histidine--tRNA ligase of Desulfotalea psychrophila (strain LSv54 / DSM 12343).